The chain runs to 509 residues: Maturase K (509 aa).

The protein belongs to the intron maturase 2 family. MatK subfamily.

The protein localises to the plastid. It localises to the chloroplast. Its function is as follows. Usually encoded in the trnK tRNA gene intron. Probably assists in splicing its own and other chloroplast group II introns. In Sequoia sempervirens (California redwood), this protein is Maturase K.